Here is a 74-residue protein sequence, read N- to C-terminus: MSKILTFVKNKIIDLINNDQIKYSRVIMIEESDSLLPVDEVHANHGFDCVEMIDENISNENIEQYKTESFFTIN.

The protein belongs to the orthopoxvirus OPG050 family.

The sequence is that of Protein OPG050 (OPG050) from Vaccinia virus (strain Ankara) (VACV).